A 944-amino-acid polypeptide reads, in one-letter code: Isoleucine--tRNA ligase (944 aa).

The 'HIGH' region motif lies at 58–68 (PYANGSIHIGH). Residue Glu563 participates in L-isoleucyl-5'-AMP binding. Residues 604 to 608 (KMSKS) carry the 'KMSKS' region motif. Residue Lys607 coordinates ATP. The Zn(2+) site is built by Cys907, Cys910, Cys927, and Cys930.

The protein belongs to the class-I aminoacyl-tRNA synthetase family. IleS type 1 subfamily. Monomer. Zn(2+) is required as a cofactor.

It localises to the cytoplasm. The enzyme catalyses tRNA(Ile) + L-isoleucine + ATP = L-isoleucyl-tRNA(Ile) + AMP + diphosphate. Its function is as follows. Catalyzes the attachment of isoleucine to tRNA(Ile). As IleRS can inadvertently accommodate and process structurally similar amino acids such as valine, to avoid such errors it has two additional distinct tRNA(Ile)-dependent editing activities. One activity is designated as 'pretransfer' editing and involves the hydrolysis of activated Val-AMP. The other activity is designated 'posttransfer' editing and involves deacylation of mischarged Val-tRNA(Ile). The chain is Isoleucine--tRNA ligase from Salmonella paratyphi A (strain ATCC 9150 / SARB42).